Here is a 473-residue protein sequence, read N- to C-terminus: Photosystem II CP43 reaction center protein (473 aa).

A propeptide spanning residues 1-14 is cleaved from the precursor; sequence MKTLYSLRRFYHVE. Residue T15 is modified to N-acetylthreonine. Phosphothreonine is present on T15. Transmembrane regions (helical) follow at residues 69–93, 134–155, 178–200, 255–275, and 291–312; these read LFEVAHFVPEKPMYEQGLILLPHLA, LLGPETLEESFPFFGYVWKDRN, KALYFGGVYDTWAPGGGDVRKIT, KPFAWARRALVWSGEAYLSYS, and WFNNTAYPSEFYGPTGPEASQA. E367 is a [CaMn4O5] cluster binding site. Residues 447–471 form a helical membrane-spanning segment; the sequence is RARAAAAGFEKGIDRDFEPVLSMTP.

This sequence belongs to the PsbB/PsbC family. PsbC subfamily. As to quaternary structure, PSII is composed of 1 copy each of membrane proteins PsbA, PsbB, PsbC, PsbD, PsbE, PsbF, PsbH, PsbI, PsbJ, PsbK, PsbL, PsbM, PsbT, PsbX, PsbY, PsbZ, Psb30/Ycf12, at least 3 peripheral proteins of the oxygen-evolving complex and a large number of cofactors. It forms dimeric complexes. Binds multiple chlorophylls and provides some of the ligands for the Ca-4Mn-5O cluster of the oxygen-evolving complex. It may also provide a ligand for a Cl- that is required for oxygen evolution. PSII binds additional chlorophylls, carotenoids and specific lipids. serves as cofactor.

It localises to the plastid. The protein resides in the chloroplast thylakoid membrane. One of the components of the core complex of photosystem II (PSII). It binds chlorophyll and helps catalyze the primary light-induced photochemical processes of PSII. PSII is a light-driven water:plastoquinone oxidoreductase, using light energy to abstract electrons from H(2)O, generating O(2) and a proton gradient subsequently used for ATP formation. The chain is Photosystem II CP43 reaction center protein from Crucihimalaya wallichii (Rock-cress).